Consider the following 791-residue polypeptide: Linear element protein rec10 (791 aa).

2 disordered regions span residues 462–523 and 644–672; these read NSVP…AKSN and LLDG…TLIS. The Nuclear localization signal motif lies at 485–492; it reads QRRKDGKF. Positions 493–503 are enriched in basic residues; the sequence is AKSTKRKKQKS. The span at 644-657 shows a compositional bias: polar residues; it reads LLDGTCSSPPNNEC.

Component of linear elements (LinEs), which are similar to synaptonemal complexes, at least composed of rec27, rec25, rec10 and mug20. Interacts with rec25; the interaction is direct. Interacts with hop1 (via N-terminus); the interaction is direct. Interacts with rec15 (via C-terminus); the interaction is direct.

Its subcellular location is the nucleus. It is found in the chromosome. Functionally, organizes linear element components on chromosomes and is thus required for meiotic DNA recombination. In Schizosaccharomyces pombe (strain 972 / ATCC 24843) (Fission yeast), this protein is Linear element protein rec10.